We begin with the raw amino-acid sequence, 694 residues long: Glycine--tRNA ligase beta subunit (694 aa).

This sequence belongs to the class-II aminoacyl-tRNA synthetase family. As to quaternary structure, tetramer of two alpha and two beta subunits.

The protein localises to the cytoplasm. It catalyses the reaction tRNA(Gly) + glycine + ATP = glycyl-tRNA(Gly) + AMP + diphosphate. In Moorella thermoacetica (strain ATCC 39073 / JCM 9320), this protein is Glycine--tRNA ligase beta subunit.